Here is a 542-residue protein sequence, read N- to C-terminus: Homeobox protein ceh-18 (542 aa).

The span at 243 to 252 (NTPTQPTASL) shows a compositional bias: polar residues. The interval 243-264 (NTPTQPTASLTPKKAENRPPVV) is disordered. A POU-specific domain is found at 290–364 (DDRIDMNELE…LLKEWLADVE (75 aa)). The homeobox DNA-binding region spans 421–480 (RRRKRTNLDMNQRNALDTFFALNPRPDHDKMTDIANSLELDRDVVRVWFCNRRQKMRRVD). The interval 514-542 (LASCQASNDDSDGTSGSPDAPSNDGCSDL) is disordered. Polar residues predominate over residues 517–530 (CQASNDDSDGTSGS).

The protein belongs to the POU transcription factor family. In terms of assembly, interacts with akir-1. Expressed in the gonadal sheath cells that signal the oocyte, but not in the oocyte.

The protein resides in the nucleus. In terms of biological role, directs gonadal sheath cell differentiation and function. Also directs gonad migration and plays a role in specifying the differentiated phenotypes of epidermal cells during postembryonic development. Plays a role in oogenesis, regulating a sheath cell signal that causes oocytes to maintain diakinesis arrest during meiosis. Negatively regulates oocyte maturation, ovulation and MAPK activation in oocytes when sperm are not available for fertilization. May be recruited by akir-1 to the promoter regions of antimicrobial peptide genes to control gene expression in response to fungal infection. This chain is Homeobox protein ceh-18, found in Caenorhabditis elegans.